The following is a 132-amino-acid chain: Small ribosomal subunit protein uS11 (132 aa).

This sequence belongs to the universal ribosomal protein uS11 family. As to quaternary structure, part of the 30S ribosomal subunit.

In terms of biological role, located on the platform of the 30S subunit. The polypeptide is Small ribosomal subunit protein uS11 (Caldivirga maquilingensis (strain ATCC 700844 / DSM 13496 / JCM 10307 / IC-167)).